The primary structure comprises 264 residues: Phosphatidylserine decarboxylase proenzyme (264 aa).

Catalysis depends on charge relay system; for autoendoproteolytic cleavage activity residues aspartate 86, histidine 142, and serine 226. Serine 226 serves as the catalytic Schiff-base intermediate with substrate; via pyruvic acid; for decarboxylase activity. Serine 226 bears the Pyruvic acid (Ser); by autocatalysis mark.

This sequence belongs to the phosphatidylserine decarboxylase family. PSD-B subfamily. Prokaryotic type I sub-subfamily. As to quaternary structure, heterodimer of a large membrane-associated beta subunit and a small pyruvoyl-containing alpha subunit. Requires pyruvate as cofactor. Post-translationally, is synthesized initially as an inactive proenzyme. Formation of the active enzyme involves a self-maturation process in which the active site pyruvoyl group is generated from an internal serine residue via an autocatalytic post-translational modification. Two non-identical subunits are generated from the proenzyme in this reaction, and the pyruvate is formed at the N-terminus of the alpha chain, which is derived from the carboxyl end of the proenzyme. The autoendoproteolytic cleavage occurs by a canonical serine protease mechanism, in which the side chain hydroxyl group of the serine supplies its oxygen atom to form the C-terminus of the beta chain, while the remainder of the serine residue undergoes an oxidative deamination to produce ammonia and the pyruvoyl prosthetic group on the alpha chain. During this reaction, the Ser that is part of the protease active site of the proenzyme becomes the pyruvoyl prosthetic group, which constitutes an essential element of the active site of the mature decarboxylase.

It is found in the cell membrane. The enzyme catalyses a 1,2-diacyl-sn-glycero-3-phospho-L-serine + H(+) = a 1,2-diacyl-sn-glycero-3-phosphoethanolamine + CO2. Its pathway is phospholipid metabolism; phosphatidylethanolamine biosynthesis; phosphatidylethanolamine from CDP-diacylglycerol: step 2/2. Catalyzes the formation of phosphatidylethanolamine (PtdEtn) from phosphatidylserine (PtdSer). In Geobacillus kaustophilus (strain HTA426), this protein is Phosphatidylserine decarboxylase proenzyme.